A 639-amino-acid chain; its full sequence is tRNA-dihydrouridine(47) synthase [NAD(P)(+)]-like (639 aa).

Polar residues-rich tracts occupy residues M1 to Q19 and Q54 to E65. 2 disordered regions span residues M1–K20 and D52–F122. A compositionally biased stretch (basic and acidic residues) spans N66–D85. Positions E103–H119 are enriched in basic residues. 2 consecutive C3H1-type zinc fingers follow at residues F122–A152 and E160–D190. FMN contacts are provided by residues P300 to T302 and Q354. C385 serves as the catalytic Proton donor. Residues K424, H454, N486–D488, and A509–R510 each bind FMN.

It belongs to the Dus family. Dus3 subfamily. Requires FMN as cofactor.

The catalysed reaction is 5,6-dihydrouridine(47) in tRNA + NAD(+) = uridine(47) in tRNA + NADH + H(+). It catalyses the reaction 5,6-dihydrouridine(47) in tRNA + NADP(+) = uridine(47) in tRNA + NADPH + H(+). The enzyme catalyses a 5,6-dihydrouridine in mRNA + NAD(+) = a uridine in mRNA + NADH + H(+). It carries out the reaction a 5,6-dihydrouridine in mRNA + NADP(+) = a uridine in mRNA + NADPH + H(+). In terms of biological role, catalyzes the synthesis of dihydrouridine, a modified base, in various RNAs, such as tRNAs, mRNAs and some long non-coding RNAs (lncRNAs). Mainly modifies the uridine in position 47 (U47) in the D-loop of most cytoplasmic tRNAs. Also able to mediate the formation of dihydrouridine in some mRNAs, thereby regulating their translation. In Xenopus tropicalis (Western clawed frog), this protein is tRNA-dihydrouridine(47) synthase [NAD(P)(+)]-like (dus3l).